A 172-amino-acid polypeptide reads, in one-letter code: Nicotinamide-nucleotide adenylyltransferase (172 aa).

It belongs to the archaeal NMN adenylyltransferase family.

The protein localises to the cytoplasm. It carries out the reaction beta-nicotinamide D-ribonucleotide + ATP + H(+) = diphosphate + NAD(+). Its pathway is cofactor biosynthesis; NAD(+) biosynthesis; NAD(+) from nicotinamide D-ribonucleotide: step 1/1. In Saccharolobus solfataricus (strain ATCC 35092 / DSM 1617 / JCM 11322 / P2) (Sulfolobus solfataricus), this protein is Nicotinamide-nucleotide adenylyltransferase.